A 571-amino-acid polypeptide reads, in one-letter code: Urease subunit alpha (571 aa).

The Urease domain occupies G134 to F571. Positions 139, 141, and 222 each coordinate Ni(2+). Residue K222 is modified to N6-carboxylysine. Position 224 (H224) interacts with substrate. 2 residues coordinate Ni(2+): H251 and H277. The active-site Proton donor is the H325. D365 lines the Ni(2+) pocket.

Belongs to the metallo-dependent hydrolases superfamily. Urease alpha subunit family. In terms of assembly, heterotrimer of UreA (gamma), UreB (beta) and UreC (alpha) subunits. Three heterotrimers associate to form the active enzyme. The cofactor is Ni cation. Post-translationally, carboxylation allows a single lysine to coordinate two nickel ions.

It localises to the cytoplasm. It carries out the reaction urea + 2 H2O + H(+) = hydrogencarbonate + 2 NH4(+). It participates in nitrogen metabolism; urea degradation; CO(2) and NH(3) from urea (urease route): step 1/1. The sequence is that of Urease subunit alpha from Bordetella parapertussis (strain 12822 / ATCC BAA-587 / NCTC 13253).